Here is a 102-residue protein sequence, read N- to C-terminus: Small ribosomal subunit protein uS10 (102 aa).

Belongs to the universal ribosomal protein uS10 family. As to quaternary structure, part of the 30S ribosomal subunit.

Involved in the binding of tRNA to the ribosomes. The sequence is that of Small ribosomal subunit protein uS10 from Bartonella henselae (strain ATCC 49882 / DSM 28221 / CCUG 30454 / Houston 1) (Rochalimaea henselae).